Reading from the N-terminus, the 36-residue chain is Dermonecrotic toxin LgSicTox-beta-LOXN2 (36 aa).

It belongs to the arthropod phospholipase D family. Class II subfamily. Requires Mg(2+) as cofactor. Contains 2 disulfide bonds. Expressed by the venom gland.

The protein localises to the secreted. It catalyses the reaction an N-(acyl)-sphingosylphosphocholine = an N-(acyl)-sphingosyl-1,3-cyclic phosphate + choline. The catalysed reaction is an N-(acyl)-sphingosylphosphoethanolamine = an N-(acyl)-sphingosyl-1,3-cyclic phosphate + ethanolamine. It carries out the reaction a 1-acyl-sn-glycero-3-phosphocholine = a 1-acyl-sn-glycero-2,3-cyclic phosphate + choline. The enzyme catalyses a 1-acyl-sn-glycero-3-phosphoethanolamine = a 1-acyl-sn-glycero-2,3-cyclic phosphate + ethanolamine. Its function is as follows. Dermonecrotic toxins cleave the phosphodiester linkage between the phosphate and headgroup of certain phospholipids (sphingolipid and lysolipid substrates), forming an alcohol (often choline) and a cyclic phosphate. This toxin acts on sphingomyelin (SM). It may also act on ceramide phosphoethanolamine (CPE), lysophosphatidylcholine (LPC) and lysophosphatidylethanolamine (LPE), but not on lysophosphatidylserine (LPS), and lysophosphatidylglycerol (LPG). It acts by transphosphatidylation, releasing exclusively cyclic phosphate products as second products. Induces dermonecrosis, hemolysis, increased vascular permeability, edema, inflammatory response, and platelet aggregation. The protein is Dermonecrotic toxin LgSicTox-beta-LOXN2 of Loxosceles gaucho (Spider).